The following is a 397-amino-acid chain: MQKKTLSDITIQGKRILMRVDFNVPLNDEREITDDKRIVEALPSIRKILDNGGRLILMSHLGRPKGKVNPIFSLAPVAAKLSELIDTPVAMAEDCIGTEVMQSALALQDGEVMLLENLRFHPEEEANDPEFAKELAALGEMYVNDAFGTAHRAHASTEGITHFVPTAVAGYLIEKELMYLGKALEKPERPFVAILGGSKISGKIDVLENLFKKVDTVLIGGAMVFTFFKAMGLETGSSLVEDNKLELALSLLEQAKNRNIKLLLPQDVIAAPELSADAPFHAVSVKELEAGEMGLDIGPLTIEAYRQEILGARTILWNGPMGVFEIDSFANGTFAVAEAMALATAKGATTIIGGGDSAAAVAKAGLASKMTHISTGGGASLEFLEGKELPGIAALND.

Residues 21 to 23 (DFN), Arg37, 60 to 63 (HLGR), Arg119, and Arg152 contribute to the substrate site. ATP-binding positions include Lys203, Gly294, Glu325, and 354 to 357 (GGDS).

This sequence belongs to the phosphoglycerate kinase family. As to quaternary structure, monomer.

The protein localises to the cytoplasm. The enzyme catalyses (2R)-3-phosphoglycerate + ATP = (2R)-3-phospho-glyceroyl phosphate + ADP. The protein operates within carbohydrate degradation; glycolysis; pyruvate from D-glyceraldehyde 3-phosphate: step 2/5. The sequence is that of Phosphoglycerate kinase from Chlorobium phaeovibrioides (strain DSM 265 / 1930) (Prosthecochloris vibrioformis (strain DSM 265)).